Reading from the N-terminus, the 159-residue chain is Cyclic pyranopterin monophosphate synthase (159 aa).

Substrate-binding positions include 75–77 and 113–114; these read LCH and ME. Asp128 is an active-site residue.

The protein belongs to the MoaC family. In terms of assembly, homohexamer; trimer of dimers.

The enzyme catalyses (8S)-3',8-cyclo-7,8-dihydroguanosine 5'-triphosphate = cyclic pyranopterin phosphate + diphosphate. Its pathway is cofactor biosynthesis; molybdopterin biosynthesis. Functionally, catalyzes the conversion of (8S)-3',8-cyclo-7,8-dihydroguanosine 5'-triphosphate to cyclic pyranopterin monophosphate (cPMP). The polypeptide is Cyclic pyranopterin monophosphate synthase (Thiobacillus denitrificans (strain ATCC 25259 / T1)).